A 209-amino-acid chain; its full sequence is Large ribosomal subunit protein uL3 (209 aa).

Belongs to the universal ribosomal protein uL3 family. Part of the 50S ribosomal subunit. Forms a cluster with proteins L14 and L19.

Its function is as follows. One of the primary rRNA binding proteins, it binds directly near the 3'-end of the 23S rRNA, where it nucleates assembly of the 50S subunit. This is Large ribosomal subunit protein uL3 from Clostridium tetani (strain Massachusetts / E88).